A 795-amino-acid chain; its full sequence is Plakophilin-2 (795 aa).

Residues 1 to 318 (MAVPGSLAEC…MTLERAVNML (318 aa)) form a required for binding to single-stranded DNA region. Serine 44 is modified (phosphoserine). Arginine 46 bears the Omega-N-methylarginine mark. A phosphoserine mark is found at serine 82, serine 132, serine 135, serine 151, serine 154, serine 155, serine 172, serine 188, and serine 232. Disordered regions lie at residues 197-233 (GTAR…SHSA) and 245-274 (SQAR…REPG). Polar residues predominate over residues 245–257 (SQARLQSTQSRTA). The span at 258–268 (RSSWPRSSVRS) shows a compositional bias: low complexity. Phosphoserine is present on residues serine 265 and serine 287. ARM repeat units lie at residues 299 to 339 (DAQL…QHES), 343 to 382 (SEAR…NLVF), 385 to 425 (NDNK…NLSS), 484 to 530 (PDGR…NLSY), 585 to 625 (PHGI…NLTA), 633 to 672 (LVAR…NLSR), 677 to 718 (QNEI…NLMQ), and 721 to 763 (YQNA…SLWA).

The protein belongs to the beta-catenin family. In terms of assembly, interacts with DSC2. Interacts with JUP. Interacts with KRT5/CK5, KRT8/CK8, KRT14/CK14, KRT18/CK18 and VIM. Interacts (via N-terminus) with MARK3/C-TAK1. Interacts with DSP. Interacts with DSG1, DSG2 and DSG3. Interacts (via N-terminus) with CTNNB1. Interacts with CDH1. Interacts with the RNA polymerase III (Pol III) complex proteins POLR3A/RPC155, POLR3F/RPC39 and POLR3C/RPC82. Interacts with CTNNA3. Interacts (via N-terminus) with SCN5A/Nav1.5. Interacts with ANK3/ANKG and GJA1/CX43. Expressed in cardiomyocytes in the heart (at protein level).

It localises to the nucleus. The protein localises to the cell junction. The protein resides in the desmosome. Its subcellular location is the cytoplasm. Its function is as follows. A component of desmosome cell-cell junctions which are required for positive regulation of cellular adhesion. Regulates focal adhesion turnover resulting in changes in focal adhesion size, cell adhesion and cell spreading, potentially via transcriptional modulation of beta-integrins. Required to maintain gingival epithelial barrier function. Important component of the desmosome that is also required for localization of desmosome component proteins such as DSC2, DSG2 and JUP to the desmosome cell-cell junction. Required for the formation of desmosome cell junctions in cardiomyocytes, thereby required for the correct formation of the heart, specifically trabeculation and formation of the atria walls. Loss of desmosome cell junctions leads to mis-localization of DSP and DSG2 resulting in disruption of cell-cell adhesion and disordered intermediate filaments. Modulates profibrotic gene expression in cardiomyocytes via regulation of DSP expression and subsequent activation of downstream TGFB1 and MAPK14/p38 MAPK signaling. Required for cardiac sodium current propagation and electrical synchrony in cardiac myocytes, via ANK3 stabilization and modulation of SCN5A/Nav1.5 localization to cell-cell junctions. Required for mitochondrial function, nuclear envelope integrity and positive regulation of SIRT3 transcription via maintaining DES localization at its nuclear envelope and cell tip anchoring points, and thereby preserving regulation of the transcriptional program. Maintenance of nuclear envelope integrity protects against DNA damage and transcriptional dysregulation of genes, especially those involved in the electron transport chain, thereby preserving mitochondrial function and protecting against superoxide radical anion generation. Binds single-stranded DNA (ssDNA). May regulate the localization of GJA1 to gap junctions in intercalated disks of the heart. This is Plakophilin-2 from Mus musculus (Mouse).